We begin with the raw amino-acid sequence, 599 residues long: MSAILSADDLNDFISPGVACIKPIESLPSKQPQKSDNPYEVTTEDKVQAENPTPAQISLTDCLACSGCVTSAEAVLISLQSHTEVLNTLDAHPELRLIQNEQGTSLDPRSAQDDEGRIFVASVSPQVRASLAATYGVSEKEATSIIHQLLSGPHGLRAGGKHGSGFTWVIDTNIMREAVLVLTADEVSDTLASEAKDPSLPKKPIVSSACPGWVCYAEKTHPFILPHLSKLKSPQALAGTLLKSTLSKTLGVPVSRIWHLAVMPCFDKKLEASREELTDVTWNPADGQMFSQPQTPVRDVDCVITTRELLTLASARGISLPSILSKSSSVSFPSFPDKALDDYLFSKRSLSAQSMMTGTSGGYLHHVLTSFQARNPGSEIVAERGRNADVVVYKLVSPENGSIIEAARYYGFRNIQNLVNKLKPPEMSKLSGARRNDALGGKARMQLSSRKAAAKTKFDYAYVEVMACPGGCTNGGGQIRIEDAREANLTAQTGTPADTNGAASKPSPHEQRAWLARVDEAYFSAGDSEDETEASSKHFSILEREAGIHQILHYWSDLMGVPLSKLAYTTFREVESDVGKPQEGVNATAQAALREGTNW.

Cys20, Cys62, Cys65, Cys68, Cys210, Cys265, Cys468, and Cys472 together coordinate [4Fe-4S] cluster.

This sequence belongs to the NARF family.

In terms of biological role, component of the cytosolic Fe/S protein assembly machinery. Required for maturation of extramitochondrial Fe/S proteins. May play a role in the transfer of pre-assembled Fe/S clusters to target apoproteins. This is Cytosolic Fe-S cluster assembly factor nar1 (nar1) from Aspergillus terreus (strain NIH 2624 / FGSC A1156).